Here is a 133-residue protein sequence, read N- to C-terminus: Small ribosomal subunit protein uS8 (133 aa).

The protein belongs to the universal ribosomal protein uS8 family. In terms of assembly, part of the 30S ribosomal subunit. Contacts proteins S5 and S12.

One of the primary rRNA binding proteins, it binds directly to 16S rRNA central domain where it helps coordinate assembly of the platform of the 30S subunit. In Synechocystis sp. (strain ATCC 27184 / PCC 6803 / Kazusa), this protein is Small ribosomal subunit protein uS8.